Consider the following 289-residue polypeptide: Proteasome assembly chaperone 1 (289 aa).

Positions 1-38 (MAATFFGEVVKAPCRAGTEEEEEEEEQSRRDTPEDREV) are disordered. The residue at position 2 (alanine 2) is an N-acetylalanine. A Phosphothreonine modification is found at threonine 18. Residues 27 to 38 (QSRRDTPEDREV) show a composition bias toward basic and acidic residues. Position 55 is a phosphothreonine (threonine 55). A Phosphoserine modification is found at serine 181. Lysine 265 is subject to N6-acetyllysine.

It belongs to the PSMG1 family. In terms of assembly, forms a heterodimer with PSMG2. The PSMG1-PSMG2 heterodimer interacts directly with the PSMA5 and PSMA7 proteasome alpha subunits. Degraded by the proteasome upon completion of 20S proteasome maturation. Highly expressed in testis with moderate expression in brain, liver and kidney and low levels in heart, skeletal muscle and pancreas.

Its subcellular location is the cytoplasm. The protein localises to the endoplasmic reticulum. In terms of biological role, chaperone protein which promotes assembly of the 20S proteasome as part of a heterodimer with PSMG2. The PSMG1-PSMG2 heterodimer binds to the PSMA5 and PSMA7 proteasome subunits, promotes assembly of the proteasome alpha subunits into the heteroheptameric alpha ring and prevents alpha ring dimerization. The polypeptide is Proteasome assembly chaperone 1 (Mus musculus (Mouse)).